The following is a 581-amino-acid chain: Polypeptide N-acetylgalactosaminyltransferase 12 (581 aa).

Residues 1–19 (MWGRTARRRCPRELRRGRE) lie on the Cytoplasmic side of the membrane. Residues 20 to 37 (ALLVLLALLALAGLGSVL) form a helical; Signal-anchor for type II membrane protein membrane-spanning segment. Over 38–581 (RAQRGAGAGA…QKWFFKERML (544 aa)) the chain is Lumenal. A disordered region spans residues 43-67 (AGAGAAEPGPPRTPRPGRREPVMPR). Intrachain disulfides connect cysteine 125–cysteine 358, cysteine 349–cysteine 422, cysteine 458–cysteine 479, cysteine 506–cysteine 521, and cysteine 547–cysteine 566. Residues 135 to 244 (LPRTSVIIAF…EGWLEPLLQR (110 aa)) form a catalytic subdomain A region. Aspartate 176 and arginine 205 together coordinate substrate. Mn(2+) is bound by residues aspartate 228 and histidine 230. Residues 304 to 366 (VIRSPTMAGG…PCSHVGHVFP (63 aa)) are catalytic subdomain B. Tryptophan 335 lines the substrate pocket. Histidine 363 provides a ligand contact to Mn(2+). Tyrosine 371 is a substrate binding site. In terms of domain architecture, Ricin B-type lectin spans 445–577 (FFGMLQNKGL…NSDHQKWFFK (133 aa)).

The protein belongs to the glycosyltransferase 2 family. GalNAc-T subfamily. The cofactor is Mn(2+). As to expression, widely expressed at different levels of expression. Highly expressed in digestive organs such as small intestine, stomach, pancreas and colon. Expressed at intermediate level in testis, thyroid gland and spleen. Weakly expressed in whole brain, cerebral cortex, cerebellum, fetal brain, bone marrow, thymus, leukocytes, heart, skeletal muscle, liver, lung, esophagus, kidney, adrenal gland, mammary gland, uterus, placenta, ovary and prostate.

It is found in the golgi apparatus membrane. It catalyses the reaction L-seryl-[protein] + UDP-N-acetyl-alpha-D-galactosamine = a 3-O-[N-acetyl-alpha-D-galactosaminyl]-L-seryl-[protein] + UDP + H(+). It carries out the reaction L-threonyl-[protein] + UDP-N-acetyl-alpha-D-galactosamine = a 3-O-[N-acetyl-alpha-D-galactosaminyl]-L-threonyl-[protein] + UDP + H(+). It functions in the pathway protein modification; protein glycosylation. Functionally, catalyzes the initial reaction in O-linked oligosaccharide biosynthesis, the transfer of an N-acetyl-D-galactosamine residue to a serine or threonine residue on the protein receptor. Has activity toward non-glycosylated peptides such as Muc5AC, Muc1a and EA2, and no detectable activity with Muc2 and Muc7. Displays enzymatic activity toward the Gal-NAc-Muc5AC glycopeptide, but no detectable activity to mono-GalNAc-glycosylated Muc1a, Muc2, Muc7 and EA2. May play an important role in the initial step of mucin-type oligosaccharide biosynthesis in digestive organs. The sequence is that of Polypeptide N-acetylgalactosaminyltransferase 12 (GALNT12) from Homo sapiens (Human).